Here is a 97-residue protein sequence, read N- to C-terminus: MKLTTVLIVAVLVLAACQFTVTDNSGDDTENPSLRSAGENQNPDSTKTITARATRARTNMRRGLSRPSKGCIGGGDPCEFHRGYTCCSEHCIIWVCA.

The first 22 residues, 1-22, serve as a signal peptide directing secretion; the sequence is MKLTTVLIVAVLVLAACQFTVT. Residues 23-49 form a disordered region; that stretch reads DNSGDDTENPSLRSAGENQNPDSTKTI. A propeptide spanning residues 23–60 is cleaved from the precursor; it reads DNSGDDTENPSLRSAGENQNPDSTKTITARATRARTNM. A compositionally biased stretch (polar residues) spans 31–45; it reads NPSLRSAGENQNPDS. Cystine bridges form between C71–C87, C78–C91, and C86–C96.

It belongs to the conotoxin O1 superfamily. In terms of tissue distribution, expressed by the venom duct.

Its subcellular location is the secreted. Its function is as follows. Probable neurotoxin with unknown target. Possibly targets ion channels. This is Conotoxin Cal6.1e from Californiconus californicus (California cone).